Consider the following 360-residue polypeptide: Probable CCR4-associated factor 1 homolog 1 (360 aa).

A divalent metal cation-binding residues include Asp-37, Glu-39, Asp-155, and Asp-226.

It belongs to the CAF1 family. As to quaternary structure, component of the CCR4-NOT complex, at least composed of CRR4 and CAF1 proteins. It depends on a divalent metal cation as a cofactor.

The protein localises to the nucleus. It is found in the cytoplasm. The enzyme catalyses Exonucleolytic cleavage of poly(A) to 5'-AMP.. Its function is as follows. Ubiquitous transcription factor required for a diverse set of processes. It is a component of the CCR4 complex involved in the control of gene expression. The protein is Probable CCR4-associated factor 1 homolog 1 (CAF1-1) of Arabidopsis thaliana (Mouse-ear cress).